A 76-amino-acid polypeptide reads, in one-letter code: MAPSVVLRSFSRLLAPARLPSCSSTRSKFYVREPVNAKPNWLAVGLSVGASVFMWIYLIQTHNEDVLEYKRRNGLE.

Residues methionine 1–serine 27 constitute a mitochondrion transit peptide. Residues asparagine 40–isoleucine 59 form a helical membrane-spanning segment.

Belongs to the complex I NDUFC1 subunit family. In terms of assembly, complex I is composed of 45 different subunits.

The protein resides in the mitochondrion inner membrane. Functionally, accessory subunit of the mitochondrial membrane respiratory chain NADH dehydrogenase (Complex I), that is believed not to be involved in catalysis. Complex I functions in the transfer of electrons from NADH to the respiratory chain. The immediate electron acceptor for the enzyme is believed to be ubiquinone. The protein is NADH dehydrogenase [ubiquinone] 1 subunit C1, mitochondrial (Ndufc1) of Mus musculus (Mouse).